Here is a 1588-residue protein sequence, read N- to C-terminus: Pentafunctional AROM polypeptide (1588 aa).

The interval 1-392 (MVQLAKVPIL…YGDSAQFVSD (392 aa)) is 3-dehydroquinate synthase. NAD(+) contacts are provided by residues 43–45 (DTN), 78–81 (ETSK), 109–111 (GGV), and D114. Position 125 (R125) interacts with 7-phospho-2-dehydro-3-deoxy-D-arabino-heptonate. Residue 134 to 135 (TS) coordinates NAD(+). The 7-phospho-2-dehydro-3-deoxy-D-arabino-heptonate site is built by D141 and K147. K156 contributes to the NAD(+) binding site. A 7-phospho-2-dehydro-3-deoxy-D-arabino-heptonate-binding site is contributed by N157. NAD(+) contacts are provided by residues 174–177 (WLET) and N185. Residue E189 coordinates Zn(2+). Residues 189–192 (EVIK) and K258 each bind 7-phospho-2-dehydro-3-deoxy-D-arabino-heptonate. E268 serves as the catalytic Proton acceptor; for 3-dehydroquinate synthase activity. 7-phospho-2-dehydro-3-deoxy-D-arabino-heptonate-binding positions include 272–276 (RNLLN) and H279. H279 serves as a coordination point for Zn(2+). Residue H283 is the Proton acceptor; for 3-dehydroquinate synthase activity of the active site. 2 residues coordinate 7-phospho-2-dehydro-3-deoxy-D-arabino-heptonate: H295 and K364. H295 serves as a coordination point for Zn(2+). The interval 405–871 (VYPFKDIPAD…WDVLHSELGA (467 aa)) is EPSP synthase. The For EPSP synthase activity role is filled by C853. Residues 890-1080 (SVVIIGMRAA…IPSGRSAFVC (191 aa)) form a shikimate kinase region. Residue 895-902 (GMRAAGKT) coordinates ATP. The interval 1081 to 1293 (LTFDDLTEQT…AAPGQLTVAQ (213 aa)) is 3-dehydroquinase. Catalysis depends on H1198, which acts as the Proton acceptor; for 3-dehydroquinate dehydratase activity. The active-site Schiff-base intermediate with substrate; for 3-dehydroquinate dehydratase activity is the K1227. The interval 1306–1588 (PKELFVVGKP…KAIFDAVTKE (283 aa)) is shikimate dehydrogenase.

In the N-terminal section; belongs to the sugar phosphate cyclases superfamily. Dehydroquinate synthase family. The protein in the 2nd section; belongs to the EPSP synthase family. It in the 3rd section; belongs to the shikimate kinase family. This sequence in the 4th section; belongs to the type-I 3-dehydroquinase family. In the C-terminal section; belongs to the shikimate dehydrogenase family. As to quaternary structure, homodimer. The cofactor is Zn(2+).

It is found in the cytoplasm. The enzyme catalyses 7-phospho-2-dehydro-3-deoxy-D-arabino-heptonate = 3-dehydroquinate + phosphate. It carries out the reaction 3-dehydroquinate = 3-dehydroshikimate + H2O. It catalyses the reaction shikimate + NADP(+) = 3-dehydroshikimate + NADPH + H(+). The catalysed reaction is shikimate + ATP = 3-phosphoshikimate + ADP + H(+). The enzyme catalyses 3-phosphoshikimate + phosphoenolpyruvate = 5-O-(1-carboxyvinyl)-3-phosphoshikimate + phosphate. It functions in the pathway metabolic intermediate biosynthesis; chorismate biosynthesis; chorismate from D-erythrose 4-phosphate and phosphoenolpyruvate: step 2/7. The protein operates within metabolic intermediate biosynthesis; chorismate biosynthesis; chorismate from D-erythrose 4-phosphate and phosphoenolpyruvate: step 3/7. Its pathway is metabolic intermediate biosynthesis; chorismate biosynthesis; chorismate from D-erythrose 4-phosphate and phosphoenolpyruvate: step 4/7. It participates in metabolic intermediate biosynthesis; chorismate biosynthesis; chorismate from D-erythrose 4-phosphate and phosphoenolpyruvate: step 5/7. It functions in the pathway metabolic intermediate biosynthesis; chorismate biosynthesis; chorismate from D-erythrose 4-phosphate and phosphoenolpyruvate: step 6/7. Its function is as follows. The AROM polypeptide catalyzes 5 consecutive enzymatic reactions in prechorismate polyaromatic amino acid biosynthesis. The chain is Pentafunctional AROM polypeptide from Saccharomyces cerevisiae (strain ATCC 204508 / S288c) (Baker's yeast).